Here is a 413-residue protein sequence, read N- to C-terminus: Histidine--tRNA ligase (413 aa).

This sequence belongs to the class-II aminoacyl-tRNA synthetase family. Homodimer.

It localises to the cytoplasm. The catalysed reaction is tRNA(His) + L-histidine + ATP = L-histidyl-tRNA(His) + AMP + diphosphate + H(+). In Wolbachia sp. subsp. Brugia malayi (strain TRS), this protein is Histidine--tRNA ligase.